A 186-amino-acid polypeptide reads, in one-letter code: Large ribosomal subunit protein uL6 (186 aa).

Belongs to the universal ribosomal protein uL6 family. In terms of assembly, part of the 50S ribosomal subunit.

This protein binds to the 23S rRNA, and is important in its secondary structure. It is located near the subunit interface in the base of the L7/L12 stalk, and near the tRNA binding site of the peptidyltransferase center. The sequence is that of Large ribosomal subunit protein uL6 from Sulfurisphaera tokodaii (strain DSM 16993 / JCM 10545 / NBRC 100140 / 7) (Sulfolobus tokodaii).